The sequence spans 257 residues: Small ribosomal subunit protein uS3 (257 aa).

The KH type-2 domain maps to 39 to 112 (IRKFLNKKYN…EIVFNVVEVR (74 aa)). A disordered region spans residues 217–257 (HEELRKERQSSASSNHGGGKRRPSRKGPRRSQEDAATEGGN). The segment covering 234–245 (GGKRRPSRKGPR) has biased composition (basic residues).

This sequence belongs to the universal ribosomal protein uS3 family. As to quaternary structure, part of the 30S ribosomal subunit. Forms a tight complex with proteins S10 and S14.

Its function is as follows. Binds the lower part of the 30S subunit head. Binds mRNA in the 70S ribosome, positioning it for translation. The sequence is that of Small ribosomal subunit protein uS3 from Haploplasma axanthum (Acholeplasma axanthum).